Consider the following 367-residue polypeptide: Cyclin-Y-like protein 1 (367 aa).

3 positions are modified to phosphoserine: Ser73, Ser111, and Ser118. Residues 186–291 form the Cyclin N-terminal domain; that stretch reads EYFKHDPEHK…FLELLQFNIN (106 aa). Ser352 bears the Phosphoserine mark.

Belongs to the cyclin family. Cyclin Y subfamily. As to quaternary structure, interacts with CDK16; this interaction mutually increases the stability of CDK16 and CCNYL1 and increases the kinase activity of CDK16. In terms of tissue distribution, highly expressed in the testis. Largely restricted to germ cells in the testis.

Its subcellular location is the cell membrane. Key regulator of Wnt signaling implicated in various biological processes including male fertility, embryonic neurogenesis and cortex development. Activates the cyclin-dependent kinase CDK16, and promotes sperm maturation. This Mus musculus (Mouse) protein is Cyclin-Y-like protein 1.